Here is a 321-residue protein sequence, read N- to C-terminus: Probable arabinan endo-1,5-alpha-L-arabinosidase A (321 aa).

The signal sequence occupies residues 1–19 (MSASVFVVVASCLAALAHG). D34 serves as the catalytic Proton acceptor. E200 serves as the catalytic Proton donor.

The protein belongs to the glycosyl hydrolase 43 family.

Its subcellular location is the secreted. It carries out the reaction Endohydrolysis of (1-&gt;5)-alpha-arabinofuranosidic linkages in (1-&gt;5)-arabinans.. The protein operates within glycan metabolism; L-arabinan degradation. In terms of biological role, endo-1,5-alpha-L-arabinanase involved in degradation of pectin. Its preferred substrate is linear 1,5-alpha-L-arabinan. The polypeptide is Probable arabinan endo-1,5-alpha-L-arabinosidase A (abnA) (Aspergillus fumigatus (strain ATCC MYA-4609 / CBS 101355 / FGSC A1100 / Af293) (Neosartorya fumigata)).